The chain runs to 418 residues: UDP-N-acetylglucosamine 1-carboxyvinyltransferase (418 aa).

22–23 (KN) is a binding site for phosphoenolpyruvate. Arginine 92 contributes to the UDP-N-acetyl-alpha-D-glucosamine binding site. Cysteine 116 functions as the Proton donor in the catalytic mechanism. Residue cysteine 116 is modified to 2-(S-cysteinyl)pyruvic acid O-phosphothioketal. Residues 121–125 (RPIDL), aspartate 305, and leucine 327 each bind UDP-N-acetyl-alpha-D-glucosamine.

This sequence belongs to the EPSP synthase family. MurA subfamily.

The protein resides in the cytoplasm. It catalyses the reaction phosphoenolpyruvate + UDP-N-acetyl-alpha-D-glucosamine = UDP-N-acetyl-3-O-(1-carboxyvinyl)-alpha-D-glucosamine + phosphate. It functions in the pathway cell wall biogenesis; peptidoglycan biosynthesis. Functionally, cell wall formation. Adds enolpyruvyl to UDP-N-acetylglucosamine. This chain is UDP-N-acetylglucosamine 1-carboxyvinyltransferase, found in Campylobacter lari (strain RM2100 / D67 / ATCC BAA-1060).